Here is a 1157-residue protein sequence, read N- to C-terminus: DNA-directed RNA polymerase subunit beta (1157 aa).

It belongs to the RNA polymerase beta chain family. As to quaternary structure, the RNAP catalytic core consists of 2 alpha, 1 beta, 1 beta' and 1 omega subunit. When a sigma factor is associated with the core the holoenzyme is formed, which can initiate transcription.

The catalysed reaction is RNA(n) + a ribonucleoside 5'-triphosphate = RNA(n+1) + diphosphate. Its function is as follows. DNA-dependent RNA polymerase catalyzes the transcription of DNA into RNA using the four ribonucleoside triphosphates as substrates. The sequence is that of DNA-directed RNA polymerase subunit beta from Tropheryma whipplei (strain TW08/27) (Whipple's bacillus).